The chain runs to 434 residues: Enolase (434 aa).

Residue glutamine 163 coordinates (2R)-2-phosphoglycerate. Glutamate 205 functions as the Proton donor in the catalytic mechanism. Mg(2+) is bound by residues aspartate 242, glutamate 291, and aspartate 318. (2R)-2-phosphoglycerate contacts are provided by lysine 343, arginine 372, serine 373, and lysine 394. The active-site Proton acceptor is lysine 343.

It belongs to the enolase family. Mg(2+) is required as a cofactor.

It localises to the cytoplasm. Its subcellular location is the secreted. The protein localises to the cell surface. The catalysed reaction is (2R)-2-phosphoglycerate = phosphoenolpyruvate + H2O. It participates in carbohydrate degradation; glycolysis; pyruvate from D-glyceraldehyde 3-phosphate: step 4/5. Catalyzes the reversible conversion of 2-phosphoglycerate (2-PG) into phosphoenolpyruvate (PEP). It is essential for the degradation of carbohydrates via glycolysis. The protein is Enolase of Streptococcus thermophilus (strain CNRZ 1066).